The primary structure comprises 468 residues: Citrate synthase, mitochondrial (468 aa).

Residues 1–30 (MSLITAGRLCARILGAKNSPCALIAARQAS) constitute a mitochondrion transit peptide. Catalysis depends on residues His-303 and His-349. Arg-358 contacts oxaloacetate. The active site involves Asp-404. Arg-430 and Arg-450 together coordinate oxaloacetate.

It belongs to the citrate synthase family. Homodimer.

It is found in the mitochondrion matrix. It carries out the reaction oxaloacetate + acetyl-CoA + H2O = citrate + CoA + H(+). It participates in carbohydrate metabolism; tricarboxylic acid cycle; isocitrate from oxaloacetate: step 1/2. Key enzyme of the Krebs tricarboxylic acid cycle which catalyzes the synthesis of citrate from acetyl coenzyme A and oxaloacetate. This chain is Citrate synthase, mitochondrial (cs), found in Xenopus tropicalis (Western clawed frog).